Here is a 258-residue protein sequence, read N- to C-terminus: tRNA (guanine-N(7)-)-methyltransferase (258 aa).

Residues 1–42 form a disordered region; the sequence is MPETPLMRDNGPVNHADQDAPAVPEEGQTKDSKGSRLHPRVT. Residues Glu90, Glu115, Asp142, and Asp165 each contribute to the S-adenosyl-L-methionine site. Residue Asp165 is part of the active site. Substrate contacts are provided by residues Lys169, Asp201, and 235–238; that span reads TKFE.

It belongs to the class I-like SAM-binding methyltransferase superfamily. TrmB family.

It catalyses the reaction guanosine(46) in tRNA + S-adenosyl-L-methionine = N(7)-methylguanosine(46) in tRNA + S-adenosyl-L-homocysteine. Its pathway is tRNA modification; N(7)-methylguanine-tRNA biosynthesis. Functionally, catalyzes the formation of N(7)-methylguanine at position 46 (m7G46) in tRNA. The protein is tRNA (guanine-N(7)-)-methyltransferase of Rhodococcus jostii (strain RHA1).